A 182-amino-acid chain; its full sequence is ATP synthase subunit delta (182 aa).

The protein belongs to the ATPase delta chain family. In terms of assembly, F-type ATPases have 2 components, F(1) - the catalytic core - and F(0) - the membrane proton channel. F(1) has five subunits: alpha(3), beta(3), gamma(1), delta(1), epsilon(1). F(0) has three main subunits: a(1), b(2) and c(10-14). The alpha and beta chains form an alternating ring which encloses part of the gamma chain. F(1) is attached to F(0) by a central stalk formed by the gamma and epsilon chains, while a peripheral stalk is formed by the delta and b chains.

Its subcellular location is the cell inner membrane. In terms of biological role, f(1)F(0) ATP synthase produces ATP from ADP in the presence of a proton or sodium gradient. F-type ATPases consist of two structural domains, F(1) containing the extramembraneous catalytic core and F(0) containing the membrane proton channel, linked together by a central stalk and a peripheral stalk. During catalysis, ATP synthesis in the catalytic domain of F(1) is coupled via a rotary mechanism of the central stalk subunits to proton translocation. Functionally, this protein is part of the stalk that links CF(0) to CF(1). It either transmits conformational changes from CF(0) to CF(1) or is implicated in proton conduction. The polypeptide is ATP synthase subunit delta (Histophilus somni (strain 2336) (Haemophilus somnus)).